The following is a 559-amino-acid chain: uncharacterized protein (559 aa).

2 disordered regions span residues 315–360 (TDDA…ERDI) and 454–559 (DKID…STEN). Residues 320-329 (NENSDNSMNT) are compositionally biased toward polar residues. Residues 348 to 357 (DNNDDSDDSE) show a composition bias toward acidic residues. Residues 433–495 (ELKIQEMEKI…KRRQKRSQRS (63 aa)) adopt a coiled-coil conformation. Residues 454-501 (DKIDMDQIKSEMSRRRDESNKRRDEKRKDREEKRRQKRSQRSDTRKQG) are compositionally biased toward basic and acidic residues. The span at 507–527 (SDEATSDQTQSTDSNNTTQTA) shows a compositional bias: low complexity.

The protein localises to the virion. This is an uncharacterized protein from Acanthamoeba polyphaga mimivirus (APMV).